The primary structure comprises 372 residues: 3 beta-hydroxysteroid dehydrogenase/Delta 5--&gt;4-isomerase type 2 (372 aa).

Tyr154 (proton acceptor) is an active-site residue. NAD(+) is bound at residue Lys158. Residues 287–307 (LTLMYWIGFLLEVVSFLLSPI) form a helical membrane-spanning segment.

This sequence belongs to the 3-beta-HSD family. In terms of tissue distribution, expressed in adrenal gland, testis and ovary.

It localises to the endoplasmic reticulum membrane. The protein resides in the mitochondrion membrane. The enzyme catalyses a 3beta-hydroxy-Delta(5)-steroid + NAD(+) = a 3-oxo-Delta(5)-steroid + NADH + H(+). It catalyses the reaction a 3-oxo-Delta(5)-steroid = a 3-oxo-Delta(4)-steroid. The catalysed reaction is pregnenolone + NAD(+) = pregn-5-ene-3,20-dione + NADH + H(+). It carries out the reaction pregn-5-ene-3,20-dione = progesterone. The enzyme catalyses 3beta-hydroxyandrost-5-en-17-one + NAD(+) = androst-5-ene-3,17-dione + NADH + H(+). It catalyses the reaction androst-5-ene-3,17-dione = androst-4-ene-3,17-dione. Its pathway is lipid metabolism; steroid biosynthesis. In terms of biological role, 3-beta-HSD is a bifunctional enzyme, that catalyzes the oxidative conversion of Delta(5)-ene-3-beta-hydroxy steroid, and the oxidative conversion of ketosteroids. The 3-beta-HSD enzymatic system plays a crucial role in the biosynthesis of all classes of hormonal steroids. This is 3 beta-hydroxysteroid dehydrogenase/Delta 5--&gt;4-isomerase type 2 from Homo sapiens (Human).